A 965-amino-acid polypeptide reads, in one-letter code: Chondroitin synthase (965 aa).

The tract at residues 132–418 (FTWYKNRKKS…IVKEKVPYIY (287 aa)) is galactosaminyltransferase; A1 domain. UDP-N-acetyl-alpha-D-galactosamine is bound by residues proline 158, arginine 162, aspartate 189, tyrosine 218, arginine 224, and 240–241 (DC). Residue aspartate 242 coordinates Mn(2+). 362–363 (ED) is a binding site for UDP-N-acetyl-alpha-D-galactosamine. Histidine 387 provides a ligand contact to Mn(2+). Residues 419–683 (RKLLPIEDSH…ESRKYIFNKT (265 aa)) are glucuronosyltransferase; A2 domain. Residues tyrosine 442, aspartate 470, and 518–521 (QLDS) contribute to the UDP-alpha-D-glucuronate site. Aspartate 522 provides a ligand contact to Mn(2+). Residues histidine 582 and 604 to 605 (AV) contribute to the UDP-alpha-D-glucuronate site. A Mn(2+)-binding site is contributed by histidine 632.

It belongs to the glycosyltransferase 2 family. CS/HAS subfamily. It depends on Mn(2+) as a cofactor.

Its subcellular location is the cell membrane. The enzyme catalyses 3-O-(beta-D-GlcA-(1-&gt;3)-beta-D-GalNAc-(1-&gt;4)-beta-D-GlcA-(1-&gt;3)-beta-D-Gal-(1-&gt;3)-beta-D-Gal-(1-&gt;4)-beta-D-Xyl)-L-seryl-[protein] + UDP-N-acetyl-alpha-D-galactosamine = 3-O-(beta-D-GalNAc-(1-&gt;4)-beta-D-GlcA-(1-&gt;3)-beta-D-GalNAc-(1-&gt;4)-beta-D-GlcA-(1-&gt;3)-beta-D-Gal-(1-&gt;3)-beta-D-Gal-(1-&gt;4)-beta-D-Xyl)-L-seryl-[protein] + UDP + H(+). It catalyses the reaction 3-O-{beta-D-GlcA-(1-&gt;3)-[beta-D-GalNAc-(1-&gt;4)-beta-D-GlcA-(1-&gt;3)](n)-beta-D-GalNAc-(1-&gt;4)-beta-D-GlcA-(1-&gt;3)-beta-D-Gal-(1-&gt;3)-beta-D-Gal-(1-&gt;4)-beta-D-Xyl}-L-seryl-[protein] + UDP-N-acetyl-alpha-D-galactosamine = 3-O-{[beta-D-GalNAc-(1-&gt;4)-beta-D-GlcA-(1-&gt;3)](n+1)-beta-D-GalNAc-(1-&gt;4)-beta-D-GlcA-(1-&gt;3)-beta-D-Gal-(1-&gt;3)-beta-D-Gal-(1-&gt;4)-beta-D-Xyl}-L-seryl-[protein] + UDP + H(+). The catalysed reaction is 3-O-(beta-D-GalNAc-(1-&gt;4)-beta-D-GlcA-(1-&gt;3)-beta-D-Gal-(1-&gt;3)-beta-D-Gal-(1-&gt;4)-beta-D-Xyl)-L-seryl-[protein] + UDP-alpha-D-glucuronate = 3-O-(beta-D-GlcA-(1-&gt;3)-beta-D-GalNAc-(1-&gt;4)-beta-D-GlcA-(1-&gt;3)-beta-D-Gal-(1-&gt;3)-beta-D-Gal-(1-&gt;4)-beta-D-Xyl)-L-seryl-[protein] + UDP + H(+). It carries out the reaction 3-O-{[beta-D-GalNAc-(1-&gt;4)-beta-D-GlcA-(1-&gt;3)](n)-beta-D-GalNAc-(1-&gt;4)-beta-D-GlcA-(1-&gt;3)-beta-D-Gal-(1-&gt;3)-beta-D-Gal-(1-&gt;4)-beta-D-Xyl}-L-seryl-[protein] + UDP-alpha-D-glucuronate = 3-O-{beta-D-GlcA-(1-&gt;3)-[beta-D-GalNAc-(1-&gt;4)-beta-D-GlcA-(1-&gt;3)](n)-beta-D-GalNAc-(1-&gt;4)-beta-D-GlcA-(1-&gt;3)-beta-D-Gal-(1-&gt;3)-beta-D-Gal-(1-&gt;4)-beta-D-Xyl}-L-seryl-[protein] + UDP + H(+). In terms of biological role, glycosyltransferase that catalyzes elongation of chondroitin, a polysaccharide composed of a repeating disaccharide of N-acetylgalactosamine (GalNAc) and glucuronic acid (GlcUA) units, by alternatively transferring the GlcUA and GalNAc moiety from UDP-GlcUA and UDP-GalNAc to the non-reducing ends of the chondroitin chain. Each chondroitin unit has the composition beta-(1-&gt;4)-GlcUA-beta-(1-&gt;3)-GalNAc. This is Chondroitin synthase (fcbD) from Pasteurella multocida (strain Pm70).